A 284-amino-acid polypeptide reads, in one-letter code: MRFVIITGLSGAGKTQALKAMEDMGFFCIDNFPPALIPKLADLFYQSKNIDKVALGMDLRGGQFFEDIYSSLDFLKKNNYDYEIVFLEASDEVLIKRFKETRRRHPLSEEGRIVDGINEERKRLSDIRKIANYIIDTSNLTSSQLKEELSNIFLKGKKFKGIIIDVMSFGYKYGIPLEADLVFDVRFLPNPFYIDELRPLTGNDEKVKEYVMKWEEAKEFLKKLGDMIKFLIPYYVREGKSQLVIAIGCTGGKHRSVAIANALYDLLKKEDYSVVVNHRDIGEE.

8-15 is a binding site for ATP; it reads GLSGAGKT. Residue 58–61 coordinates GTP; it reads DLRG.

It belongs to the RapZ-like family.

In terms of biological role, displays ATPase and GTPase activities. This is Nucleotide-binding protein TTE1834 from Caldanaerobacter subterraneus subsp. tengcongensis (strain DSM 15242 / JCM 11007 / NBRC 100824 / MB4) (Thermoanaerobacter tengcongensis).